The following is a 145-amino-acid chain: Small ribosomal subunit protein eS19 (145 aa).

N6-acetyllysine is present on Lys-23. Position 67 is an omega-N-methylarginine (Arg-67). N6-acetyllysine occurs at positions 111 and 115. The residue at position 143 (Lys-143) is an N6-succinyllysine.

Belongs to the eukaryotic ribosomal protein eS19 family. Component of the small ribosomal subunit. Part of the small subunit (SSU) processome, composed of more than 70 proteins and the RNA chaperone small nucleolar RNA (snoRNA) U3. Interacts with RPS19BP1.

The protein resides in the cytoplasm. The protein localises to the nucleus. Its subcellular location is the nucleolus. Its function is as follows. Component of the small ribosomal subunit. The ribosome is a large ribonucleoprotein complex responsible for the synthesis of proteins in the cell. Required for pre-rRNA processing and maturation of 40S ribosomal subunits. Part of the small subunit (SSU) processome, first precursor of the small eukaryotic ribosomal subunit. During the assembly of the SSU processome in the nucleolus, many ribosome biogenesis factors, an RNA chaperone and ribosomal proteins associate with the nascent pre-rRNA and work in concert to generate RNA folding, modifications, rearrangements and cleavage as well as targeted degradation of pre-ribosomal RNA by the RNA exosome. This chain is Small ribosomal subunit protein eS19 (Rps19), found in Rattus norvegicus (Rat).